A 565-amino-acid chain; its full sequence is E3 ubiquitin-protein ligase RNF168 (565 aa).

An RING-type zinc finger spans residues 16 to 55 (CGICMEILLEPVTLPCNHTLCNPCFQSTVEKANLCCPFCR). A Phosphoserine modification is found at Ser-70. An LR motif 1 motif is present at residues 110-128 (LSEPGELRREYEEEISRVE). Residue Ser-134 is modified to Phosphoserine. Residues 143–151 (EEYIQRLLA) carry the UMI motif motif. Disordered stretches follow at residues 150-223 (LAEE…KTFG) and 252-302 (SKET…PQLC). The segment covering 157–179 (EKRQREKRRSEMEEQLRGDEELA) has biased composition (basic and acidic residues). The short motif at 168–191 (MEEQLRGDEELARSLSTSINSNYE) is the MIU motif 1 element. Residues 181 to 201 (SLSTSINSNYERNTLASPLSS) are compositionally biased toward polar residues. A Phosphoserine modification is found at Ser-197. Lys-210 participates in a covalent cross-link: Glycyl lysine isopeptide (Lys-Gly) (interchain with G-Cter in SUMO2). Residues 275–293 (PTLSPQTCLETQEQGSESS) show a composition bias toward polar residues. 2 positions are modified to phosphoserine: Ser-413 and Ser-414. Residues 438–461 (RHKQEEQDRLLALQLQKEVDKEQM) carry the MIU motif 2 motif. The segment at 458 to 521 (KEQMVPNRQK…TKGDYWEPFK (64 aa)) is disordered. The short motif at 465-476 (RQKGSPDQYQLR) is the LR motif 2 element. Residues 466–477 (QKGSPDQYQLRT) show a composition bias toward polar residues. Ser-469 bears the Phosphoserine mark. The span at 504–518 (DHSKSPRNTKGDYWE) shows a compositional bias: basic and acidic residues. A Glycyl lysine isopeptide (Lys-Gly) (interchain with G-Cter in SUMO2) cross-link involves residue Lys-525.

It belongs to the RNF168 family. In terms of assembly, monomer. Interacts with UBE2N/UBC13. Sumoylated with SUMO1 by PIAS4 in response to double-strand breaks (DSBs). In terms of processing, ubiquitinated.

Its subcellular location is the nucleus. The enzyme catalyses S-ubiquitinyl-[E2 ubiquitin-conjugating enzyme]-L-cysteine + [acceptor protein]-L-lysine = [E2 ubiquitin-conjugating enzyme]-L-cysteine + N(6)-ubiquitinyl-[acceptor protein]-L-lysine.. Its pathway is protein modification; protein ubiquitination. In terms of biological role, E3 ubiquitin-protein ligase required for accumulation of repair proteins to sites of DNA damage. Acts with UBE2N/UBC13 to amplify the RNF8-dependent histone ubiquitination. Recruited to sites of DNA damage at double-strand breaks (DSBs) by binding to ubiquitinated histone H2A and H2AX and amplifies the RNF8-dependent H2A ubiquitination, promoting the formation of 'Lys-63'-linked ubiquitin conjugates. This leads to concentrate ubiquitinated histones H2A and H2AX at DNA lesions to the threshold required for recruitment of TP53BP1 and BRCA1. Also recruited at DNA interstrand cross-links (ICLs) sites and promotes accumulation of 'Lys-63'-linked ubiquitination of histones H2A and H2AX, leading to recruitment of FAAP20 and Fanconi anemia (FA) complex, followed by interstrand cross-link repair. H2A ubiquitination also mediates the ATM-dependent transcriptional silencing at regions flanking DSBs in cis, a mechanism to avoid collision between transcription and repair intermediates. Also involved in class switch recombination in immune system, via its role in regulation of DSBs repair. Following DNA damage, promotes the ubiquitination and degradation of JMJD2A/KDM4A in collaboration with RNF8, leading to unmask H4K20me2 mark and promote the recruitment of TP53BP1 at DNA damage sites. Not able to initiate 'Lys-63'-linked ubiquitination in vitro; possibly due to partial occlusion of the UBE2N/UBC13-binding region. Catalyzes monoubiquitination of 'Lys-13' and 'Lys-15' of nucleosomal histone H2A (H2AK13Ub and H2AK15Ub, respectively). The polypeptide is E3 ubiquitin-protein ligase RNF168 (Mus musculus (Mouse)).